The chain runs to 588 residues: L-fucose isomerase (588 aa).

Residues Glu335 and Asp359 each act as proton acceptor in the active site. Mn(2+) contacts are provided by Glu335, Asp359, and His525.

This sequence belongs to the L-fucose isomerase family. Requires Mn(2+) as cofactor.

It is found in the cytoplasm. It carries out the reaction L-fucose = L-fuculose. It participates in carbohydrate degradation; L-fucose degradation; L-lactaldehyde and glycerone phosphate from L-fucose: step 1/3. Its function is as follows. Converts the aldose L-fucose into the corresponding ketose L-fuculose. This chain is L-fucose isomerase, found in Streptococcus pneumoniae (strain JJA).